We begin with the raw amino-acid sequence, 411 residues long: E3 ubiquitin-protein ligase PUB23 (411 aa).

Positions 11 to 86 constitute a U-box domain; the sequence is EIPPFFLCPI…QSWCTLNASY (76 aa). 4 ARM repeats span residues 132–173, 175–203, 221–261, and 263–306; these read ATNK…HLET, ETVL…RGMY, DPMQ…NICP, and GRNR…LLCQ.

In terms of assembly, interacts with RPN12A. In terms of processing, auto-ubiquitinated.

It localises to the cytoplasm. The catalysed reaction is S-ubiquitinyl-[E2 ubiquitin-conjugating enzyme]-L-cysteine + [acceptor protein]-L-lysine = [E2 ubiquitin-conjugating enzyme]-L-cysteine + N(6)-ubiquitinyl-[acceptor protein]-L-lysine.. Its pathway is protein modification; protein ubiquitination. Its function is as follows. E3 ubiquitin-protein ligase that negatively regulates water stress response. May control in coordination with PUB23 a drought signaling pathway by ubiquitinating cytosolic RPN12a. Acts as a negative regulator of the immunity triggered by the pathogen-associated molecular patterns (PAMPs), in association with PUB22 and PUB24. In Arabidopsis thaliana (Mouse-ear cress), this protein is E3 ubiquitin-protein ligase PUB23 (PUB23).